A 353-amino-acid polypeptide reads, in one-letter code: uncharacterized protein (353 aa).

Transmembrane regions (helical) follow at residues 16–36 (AAYIIGFSFLAVSIILGISCG), 77–97 (VVLAALVGAALSIAGAAFQGL), 106–128 (YTLGVSSGASVGAVVTLFLGLHL), 140–160 (SVAAALATMAAVLFFSRLVHA), 167–187 (LILTGVITNSFLGAFISLIIA), 208–228 (GWSYVILFLPFFLLGTILLII), 263–283 (LLTGSAVAVSGTIGFVGLVIP), 296–316 (HLLPLSALLGAGFLVLADLLS), and 323–343 (IELPIGIITSLAGAPVFALIL).

The protein belongs to the binding-protein-dependent transport system permease family. FecCD subfamily. As to quaternary structure, the complex is composed of two ATP-binding proteins (YvrA), two transmembrane proteins (YvrB) and a solute-binding protein (YvrC).

It localises to the cell membrane. Its function is as follows. Probably part of an ABC transporter complex. Probably responsible for the translocation of the substrate across the membrane. This is an uncharacterized protein from Bacillus subtilis (strain 168).